A 247-amino-acid polypeptide reads, in one-letter code: Cell division protein ZapD (247 aa).

This sequence belongs to the ZapD family. Interacts with FtsZ.

It localises to the cytoplasm. Cell division factor that enhances FtsZ-ring assembly. Directly interacts with FtsZ and promotes bundling of FtsZ protofilaments, with a reduction in FtsZ GTPase activity. This Salmonella dublin (strain CT_02021853) protein is Cell division protein ZapD.